The sequence spans 242 residues: Megakaryocyte and platelet inhibitory receptor G6b (242 aa).

A signal peptide spans 1–17; sequence MALVLPLLPLLLSKVQG. Residues Asn-32 and Asn-112 are each glycosylated (N-linked (GlcNAc...) asparagine). A helical membrane pass occupies residues 141–161; sequence VLIPLLGVGLVLGLGVAGVVW. 2 short sequence motifs (ITIM motif) span residues 210-215 and 236-241; these read LHYADL and TVYAVV. Position 212 is a phosphotyrosine (Tyr-212).

In terms of assembly, interacts (via ITIM motif) with PTPN6 and PTPN11. Binds to heparin. N-glycosylated. Post-translationally, may be O-glycosylated. In terms of processing, phosphorylated. In terms of tissue distribution, expressed in mature megakaryocytes and platelets. Not expressed by immature megakaryocytes.

It is found in the cell membrane. In terms of biological role, inhibitory receptor that acts as a critical regulator of hematopoietic lineage differentiation, megakaryocyte function and platelet production. Inhibits platelet aggregation and activation by agonists such as ADP and collagen-related peptide. This regulation of megakaryocate function as well as platelet production ann activation is done through the inhibition (via the 2 ITIM motifs) of the receptors CLEC1B and GP6:FcRgamma signaling. Appears to operate in a calcium-independent manner. In Mus musculus (Mouse), this protein is Megakaryocyte and platelet inhibitory receptor G6b.